Here is a 240-residue protein sequence, read N- to C-terminus: Endonuclease V (240 aa).

The Mg(2+) site is built by D46 and D116.

It belongs to the endonuclease V family. Mg(2+) serves as cofactor.

It is found in the cytoplasm. It catalyses the reaction Endonucleolytic cleavage at apurinic or apyrimidinic sites to products with a 5'-phosphate.. DNA repair enzyme involved in the repair of deaminated bases. Selectively cleaves double-stranded DNA at the second phosphodiester bond 3' to a deoxyinosine leaving behind the intact lesion on the nicked DNA. The protein is Endonuclease V of Rhodospirillum centenum (strain ATCC 51521 / SW).